The primary structure comprises 27 residues: U18-ctenitoxin-Co1a (27 aa).

It belongs to the u18-CNTX family. As to expression, expressed by the venom gland.

The protein resides in the secreted. Not toxic to mice by intracerebroventricular injection. The protein is U18-ctenitoxin-Co1a of Ctenus ornatus (Brazilian spider).